Reading from the N-terminus, the 511-residue chain is DnaJ homolog 1, mitochondrial (511 aa).

The transit peptide at 1–55 (MAFQQGVLSRCSGVFRHHVGHSRHINNILYRHAIAFASIAPRIPKSSFHTSAIRN) directs the protein to the mitochondrion. A J domain is found at 59–127 (FKDPYDTLGL…RQQYDQFGPA (69 aa)). The CR-type zinc-finger motif lies at 217–297 (SKNVQLRFSA…CHGEGVQVNR (81 aa)). CXXCXGXG motif repeat units lie at residues 230 to 237 (CSTCSGTG), 247 to 254 (CSTCHGTG), 269 to 276 (CPTCNGEG), and 285 to 292 (CTKCHGEG).

It localises to the mitochondrion. Its function is as follows. Plays a role in mitochondrial biogenesis and protein folding. The protein is DnaJ homolog 1, mitochondrial (MDJ1) of Saccharomyces cerevisiae (strain ATCC 204508 / S288c) (Baker's yeast).